The primary structure comprises 181 residues: MRAYIYDEESQLSPQDEHESSQSVSKQELEKLGVLYWSIDSIDQVNSIAIQRDYKNRDQIICSPQAMGDIYQQKLDTFFEEHLHEDEEIRWVVEGSGYFDVRDQTDQRWVRIKVEKGDLLVLPPGIFHRFTVDKDNYIKAMRLFKDEPKWVALNRSTESESNPYRKAYIEQVGKAMTMGAF.

Residues 1 to 10 (MRAYIYDEES) show a composition bias toward acidic residues. Residues 1 to 23 (MRAYIYDEESQLSPQDEHESSQS) form a disordered region. The Fe(2+) site is built by His82, His84, Glu88, and His128. Residues His82, His84, Glu88, and His128 each coordinate Ni(2+).

It belongs to the acireductone dioxygenase (ARD) family. Fe(2+) is required as a cofactor. It depends on Ni(2+) as a cofactor.

The protein localises to the cytoplasm. Its subcellular location is the nucleus. It carries out the reaction 1,2-dihydroxy-5-(methylsulfanyl)pent-1-en-3-one + O2 = 4-methylsulfanyl-2-oxobutanoate + formate + 2 H(+). The enzyme catalyses 1,2-dihydroxy-5-(methylsulfanyl)pent-1-en-3-one + O2 = 3-(methylsulfanyl)propanoate + CO + formate + 2 H(+). It functions in the pathway amino-acid biosynthesis; L-methionine biosynthesis via salvage pathway; L-methionine from S-methyl-5-thio-alpha-D-ribose 1-phosphate: step 5/6. Functionally, catalyzes 2 different reactions between oxygen and the acireductone 1,2-dihydroxy-3-keto-5-methylthiopentene (DHK-MTPene) depending upon the metal bound in the active site. Fe-containing acireductone dioxygenase (Fe-ARD) produces formate and 2-keto-4-methylthiobutyrate (KMTB), the alpha-ketoacid precursor of methionine in the methionine recycle pathway. Ni-containing acireductone dioxygenase (Ni-ARD) produces methylthiopropionate, carbon monoxide and formate, and does not lie on the methionine recycle pathway. The chain is Acireductone dioxygenase from Puccinia graminis f. sp. tritici (strain CRL 75-36-700-3 / race SCCL) (Black stem rust fungus).